A 68-amino-acid polypeptide reads, in one-letter code: DNA-directed RNA polymerase subunit omega (68 aa).

Belongs to the RNA polymerase subunit omega family. As to quaternary structure, the RNAP catalytic core consists of 2 alpha, 1 beta, 1 beta' and 1 omega subunit. When a sigma factor is associated with the core the holoenzyme is formed, which can initiate transcription.

It carries out the reaction RNA(n) + a ribonucleoside 5'-triphosphate = RNA(n+1) + diphosphate. Promotes RNA polymerase assembly. Latches the N- and C-terminal regions of the beta' subunit thereby facilitating its interaction with the beta and alpha subunits. This is DNA-directed RNA polymerase subunit omega from Persephonella marina (strain DSM 14350 / EX-H1).